The primary structure comprises 500 residues: L-arabinose isomerase (500 aa).

Positions 306, 333, 349, and 448 each coordinate Mn(2+).

The protein belongs to the arabinose isomerase family. Mn(2+) serves as cofactor.

It carries out the reaction beta-L-arabinopyranose = L-ribulose. The protein operates within carbohydrate degradation; L-arabinose degradation via L-ribulose; D-xylulose 5-phosphate from L-arabinose (bacterial route): step 1/3. Functionally, catalyzes the conversion of L-arabinose to L-ribulose. The polypeptide is L-arabinose isomerase (Shewanella sp. (strain MR-4)).